Consider the following 143-residue polypeptide: MAKKIDAYIKLQVKAGQANPSPPVGPALGQRGVNIMEFCKAFNAQTQGLEPGLPIPVVITVYSDRSFTFITKTPPASILLKKAAGITSGSATPNTNKVGKVTRAQLEEIAKTKMPDLTAADLDAAVRSIAGSARSMGLEVEGV.

This sequence belongs to the universal ribosomal protein uL11 family. Part of the ribosomal stalk of the 50S ribosomal subunit. Interacts with L10 and the large rRNA to form the base of the stalk. L10 forms an elongated spine to which L12 dimers bind in a sequential fashion forming a multimeric L10(L12)X complex. One or more lysine residues are methylated.

Forms part of the ribosomal stalk which helps the ribosome interact with GTP-bound translation factors. The polypeptide is Large ribosomal subunit protein uL11 (Thioalkalivibrio sulfidiphilus (strain HL-EbGR7)).